We begin with the raw amino-acid sequence, 451 residues long: Adenylosuccinate synthetase isozyme 2 (451 aa).

GTP-binding positions include 34–40 (GDEGKGK) and 62–64 (GHT). Residue Asp-35 is the Proton acceptor of the active site. 2 residues coordinate Mg(2+): Asp-35 and Gly-62. Asp-35 contacts substrate. Residues 35 to 38 (DEGK), 60 to 63 (NAGH), Thr-157, Arg-171, Asn-250, Thr-265, and Arg-329 each bind IMP. Residue His-63 is the Proton donor of the active site. Residue 325–331 (VTTGRKR) coordinates substrate. GTP-binding positions include Arg-331, 357 to 359 (KLD), and 439 to 442 (GVGK).

It belongs to the adenylosuccinate synthetase family. Homodimer. Requires Mg(2+) as cofactor.

It is found in the cytoplasm. It localises to the mitochondrion. The enzyme catalyses IMP + L-aspartate + GTP = N(6)-(1,2-dicarboxyethyl)-AMP + GDP + phosphate + 2 H(+). The protein operates within purine metabolism; AMP biosynthesis via de novo pathway; AMP from IMP: step 1/2. Its activity is regulated as follows. Inhibited competitively by AMP and IMP and non-competitively by fructose 1,6-bisphosphate. Plays an important role in the de novo pathway and in the salvage pathway of purine nucleotide biosynthesis. Catalyzes the first committed step in the biosynthesis of AMP from IMP. This chain is Adenylosuccinate synthetase isozyme 2, found in Gallus gallus (Chicken).